The chain runs to 99 residues: Large ribosomal subunit protein bL21 (99 aa).

It belongs to the bacterial ribosomal protein bL21 family. Part of the 50S ribosomal subunit. Contacts protein L20.

This protein binds to 23S rRNA in the presence of protein L20. The polypeptide is Large ribosomal subunit protein bL21 (Mycoplasmopsis agalactiae (strain NCTC 10123 / CIP 59.7 / PG2) (Mycoplasma agalactiae)).